The sequence spans 413 residues: Chloramphenicol resistance protein CraA (413 aa).

Transmembrane regions (helical) follow at residues 18 to 38, 55 to 75, 84 to 104, 110 to 130, 147 to 167, 170 to 190, 228 to 248, 260 to 280, 289 to 309, 312 to 332, 349 to 369, and 373 to 393; these read LMFPLALVLFEFAVYIGNDLI, WAPSSMSFYLLGGASVAWLLG, KKVLLSGVLFFALCCFLILLT, FLTLRFLQGIGLSVISAVGYA, LMANISLLAPLLGPVLGAFLI, VSWHWGFVAIALLALLSWVGL, ALPLVGMPLMLWIALSPIILV, LAQFPVFLGLIVGNIVLIKII, VLIGLPIMLTGTLILILGVVW, YLIPCLLIGMTLICFGEGISF, TVAAAVSMLLMTSFFAMIELV, and YTQFHLWAFVLSAFAFIALWF.

The protein belongs to the major facilitator superfamily.

It is found in the cell inner membrane. Functionally, efflux pump that mediates resistance to chloramphenicol. The sequence is that of Chloramphenicol resistance protein CraA from Acinetobacter baumannii (strain ATCC 19606 / DSM 30007 / JCM 6841 / CCUG 19606 / CIP 70.34 / NBRC 109757 / NCIMB 12457 / NCTC 12156 / 81).